We begin with the raw amino-acid sequence, 396 residues long: Lipopolysaccharide assembly protein B (396 aa).

A helical transmembrane segment spans residues 1 to 20 (MIELLFLLLPIAAAYGWYMG). Topologically, residues 21 to 396 (RRSAKKDQDD…IKPVSNQEHN (376 aa)) are cytoplasmic. TPR repeat units follow at residues 35 to 68 (LSRD…QEIE), 77 to 109 (FEAE…SPNY), 149 to 182 (ENAL…KPQE), and 221 to 254 (VRAS…NPDY). Residues Cys-364, Cys-367, Cys-378, and Cys-381 each coordinate Fe cation.

The protein belongs to the LapB family.

It localises to the cell inner membrane. Modulates cellular lipopolysaccharide (LPS) levels by regulating LpxC, which is involved in lipid A biosynthesis. May act by modulating the proteolytic activity of FtsH towards LpxC. May also coordinate assembly of proteins involved in LPS synthesis at the plasma membrane. This is Lipopolysaccharide assembly protein B from Haemophilus influenzae (strain ATCC 51907 / DSM 11121 / KW20 / Rd).